We begin with the raw amino-acid sequence, 231 residues long: MAEKANNFPPLPRFIPLKPCFHQDFENDIPDLHRTTCKRLYSLWMLNSITLGVNLIGCLAWMIGGGGAINFGLAILWVILFTPCSYVCWFRPAYKAFKTDSSFNFMAFFFTFSAQLVISIIQAVGIPGWGVCGWIATVGFFGTSVGAAVVMLFPTILFTAVAVLSFVALTKVHRFYRGAGGSLSKAQEEWTTGAWKNPHVQQAAQNAAQGAMSHNDPQYSATPNYGYSNQM.

Residues 1 to 39 (MAEKANNFPPLPRFIPLKPCFHQDFENDIPDLHRTTCKR) are Cytoplasmic-facing. The chain crosses the membrane as a helical span at residues 40–60 (LYSLWMLNSITLGVNLIGCLA). Residues 61 to 67 (WMIGGGG) lie on the Extracellular side of the membrane. The helical transmembrane segment at 68–88 (AINFGLAILWVILFTPCSYVC) threads the bilayer. Residues 89–102 (WFRPAYKAFKTDSS) are Cytoplasmic-facing. The chain crosses the membrane as a helical span at residues 103–125 (FNFMAFFFTFSAQLVISIIQAVG). Over 126–148 (IPGWGVCGWIATVGFFGTSVGAA) the chain is Extracellular. The helical transmembrane segment at 149–169 (VVMLFPTILFTAVAVLSFVAL) threads the bilayer. Residues 170–231 (TKVHRFYRGA…TPNYGYSNQM (62 aa)) lie on the Cytoplasmic side of the membrane.

The protein belongs to the SCAMP family. SCAMP5 subfamily.

It is found in the cell membrane. The protein resides in the golgi apparatus membrane. The protein localises to the golgi apparatus. Its subcellular location is the trans-Golgi network membrane. It localises to the recycling endosome membrane. It is found in the cytoplasmic vesicle. The protein resides in the secretory vesicle. The protein localises to the synaptic vesicle membrane. In terms of biological role, required for the calcium-dependent exocytosis of signal sequence-containing cytokines. Probably acts in cooperation with the SNARE machinery. This chain is Secretory carrier-associated membrane protein 5 (scamp5), found in Xenopus tropicalis (Western clawed frog).